Here is a 338-residue protein sequence, read N- to C-terminus: Glyceraldehyde-3-phosphate dehydrogenase (338 aa).

NAD(+) is bound by residues Arg13–Ile14, Asp35, and Arg80. D-glyceraldehyde 3-phosphate is bound by residues Ser151 to Thr153, Thr182, Thr211 to Gly212, and Arg234. Cys152 functions as the Nucleophile in the catalytic mechanism. Asn317 provides a ligand contact to NAD(+).

This sequence belongs to the glyceraldehyde-3-phosphate dehydrogenase family. In terms of assembly, homotetramer.

It is found in the cytoplasm. The enzyme catalyses D-glyceraldehyde 3-phosphate + phosphate + NAD(+) = (2R)-3-phospho-glyceroyl phosphate + NADH + H(+). It participates in carbohydrate degradation; glycolysis; pyruvate from D-glyceraldehyde 3-phosphate: step 1/5. This chain is Glyceraldehyde-3-phosphate dehydrogenase (gpdA), found in Aspergillus oryzae (strain ATCC 42149 / RIB 40) (Yellow koji mold).